A 163-amino-acid chain; its full sequence is F-box protein At2g35280 (163 aa).

Positions 8–57 (ISRLEALPQDLLREIVAKIGVKSAEDYHNCILSCKELGASANDERVLKTL) constitute an F-box domain.

This Arabidopsis thaliana (Mouse-ear cress) protein is F-box protein At2g35280.